A 589-amino-acid polypeptide reads, in one-letter code: Splicing factor U2af large subunit B (589 aa).

Residues 1–195 form a disordered region; it reads MMSYEGNGDG…KRRSGFDMAP (195 aa). Residues 14 to 27 are compositionally biased toward polar residues; sequence STENHNENYISLES. 2 stretches are compositionally biased toward basic and acidic residues: residues 29-100 and 109-145; these read PFHE…DRQR and RDRSRERSEKRDDLDDDHHRRSRDRDRRRSRDRDREV. Composition is skewed to basic residues over residues 146–156 and 164–188; these read RHRRRSRSRSR and RSEHRHKSEHRSRSRSRSRSKSKRR. RRM domains follow at residues 255–338, 375–453, and 494–580; these read RRVY…RPTD, DRIF…RAIQ, and QVVT…YPED.

The protein belongs to the splicing factor SR family. Component of the spliceosome. Interacts with SF1 in the nucleus.

The protein localises to the nucleus. It is found in the nucleus speckle. Functionally, necessary for the splicing of pre-mRNA. This Arabidopsis thaliana (Mouse-ear cress) protein is Splicing factor U2af large subunit B.